Reading from the N-terminus, the 632-residue chain is tRNA uridine 5-carboxymethylaminomethyl modification enzyme MnmG (632 aa).

Glycine 14 to glycine 19 is an FAD binding site. NAD(+) is bound at residue glycine 273–phenylalanine 287.

The protein belongs to the MnmG family. In terms of assembly, homodimer. Heterotetramer of two MnmE and two MnmG subunits. Requires FAD as cofactor.

Its subcellular location is the cytoplasm. In terms of biological role, NAD-binding protein involved in the addition of a carboxymethylaminomethyl (cmnm) group at the wobble position (U34) of certain tRNAs, forming tRNA-cmnm(5)s(2)U34. The chain is tRNA uridine 5-carboxymethylaminomethyl modification enzyme MnmG from Clostridium novyi (strain NT).